The sequence spans 443 residues: Putative F-box/FBD/LRR-repeat protein At3g49030 (443 aa).

In terms of domain architecture, F-box spans 20 to 68; the sequence is EDRISELPEDLLLQILSDIPTENVIATSVLSKRWRSLWKMVPNLTFDFT. LRR repeat units follow at residues 74 to 100, 152 to 179, 180 to 205, 218 to 252, 272 to 297, and 320 to 345; these read HQTF…QLNF, ILEI…RLYE, VHFK…SVHR, VPSL…NIVG, ISDV…SLES, and KERE…KLTG. The region spanning 357–408 is the FBD domain; that stretch reads NWNPPKCVPECLLFHLEKFLWTGYEWQRGDEKEVATYILENARLLKKATFST.

This Arabidopsis thaliana (Mouse-ear cress) protein is Putative F-box/FBD/LRR-repeat protein At3g49030.